The primary structure comprises 741 residues: 1,4-alpha-glucan branching enzyme GlgB 2 (741 aa).

The tract at residues 1–38 is disordered; sequence MALRDTSIPEPSGPVPPAPGACATAPPLDPTDRGRLLA. Asp421 acts as the Nucleophile in catalysis. The active-site Proton donor is Glu474.

Belongs to the glycosyl hydrolase 13 family. GlgB subfamily. Monomer.

The enzyme catalyses Transfers a segment of a (1-&gt;4)-alpha-D-glucan chain to a primary hydroxy group in a similar glucan chain.. It participates in glycan biosynthesis; glycogen biosynthesis. Functionally, catalyzes the formation of the alpha-1,6-glucosidic linkages in glycogen by scission of a 1,4-alpha-linked oligosaccharide from growing alpha-1,4-glucan chains and the subsequent attachment of the oligosaccharide to the alpha-1,6 position. This chain is 1,4-alpha-glucan branching enzyme GlgB 2 (glgB2), found in Streptomyces coelicolor (strain ATCC BAA-471 / A3(2) / M145).